We begin with the raw amino-acid sequence, 205 residues long: uncharacterized protein (205 aa).

It belongs to the IIV-6 170L family.

This is an uncharacterized protein from Invertebrate iridescent virus 3 (IIV-3).